The chain runs to 405 residues: Replication factor C large subunit (405 aa).

47–54 provides a ligand contact to ATP; the sequence is GPPGVGKT.

It belongs to the activator 1 small subunits family. RfcL subfamily. As to quaternary structure, heteromultimer composed of small subunits (RfcS) and large subunits (RfcL).

Part of the RFC clamp loader complex which loads the PCNA sliding clamp onto DNA. This chain is Replication factor C large subunit, found in Saccharolobus islandicus (strain M.16.4 / Kamchatka #3) (Sulfolobus islandicus).